Reading from the N-terminus, the 258-residue chain is Acetylglutamate kinase (258 aa).

Residues 44–45 (GG), arginine 66, and asparagine 158 each bind substrate. Residues 181–186 (DVSGIL) and 209–211 (IIT) each bind ATP.

This sequence belongs to the acetylglutamate kinase family. ArgB subfamily. In terms of assembly, homodimer.

Its subcellular location is the cytoplasm. It catalyses the reaction N-acetyl-L-glutamate + ATP = N-acetyl-L-glutamyl 5-phosphate + ADP. It functions in the pathway amino-acid biosynthesis; L-arginine biosynthesis; N(2)-acetyl-L-ornithine from L-glutamate: step 2/4. In terms of biological role, catalyzes the ATP-dependent phosphorylation of N-acetyl-L-glutamate. The protein is Acetylglutamate kinase of Salmonella paratyphi A (strain ATCC 9150 / SARB42).